Here is a 141-residue protein sequence, read N- to C-terminus: MVVERTLSIIKPDAVAKNVIGQIYARFEAAGLKVVAARMAHLSRVEAENFYAIHRERPFFKDLVEFMISGPVMIQVLEGENAIAKNRELMGATDPKKAEKGTIRADFAENIDANAVHGSDAPETAAVEIACFFPSLEVYSR.

Residues lysine 11, phenylalanine 59, arginine 87, threonine 93, arginine 104, and asparagine 114 each contribute to the ATP site. Histidine 117 (pros-phosphohistidine intermediate) is an active-site residue.

The protein belongs to the NDK family. In terms of assembly, homotetramer. Mg(2+) is required as a cofactor.

It localises to the cytoplasm. The enzyme catalyses a 2'-deoxyribonucleoside 5'-diphosphate + ATP = a 2'-deoxyribonucleoside 5'-triphosphate + ADP. It catalyses the reaction a ribonucleoside 5'-diphosphate + ATP = a ribonucleoside 5'-triphosphate + ADP. Major role in the synthesis of nucleoside triphosphates other than ATP. The ATP gamma phosphate is transferred to the NDP beta phosphate via a ping-pong mechanism, using a phosphorylated active-site intermediate. The polypeptide is Nucleoside diphosphate kinase (Nitrosomonas eutropha (strain DSM 101675 / C91 / Nm57)).